The chain runs to 373 residues: Anhydro-N-acetylmuramic acid kinase (373 aa).

An ATP-binding site is contributed by 12–19 (GTSLDGVD).

It belongs to the anhydro-N-acetylmuramic acid kinase family.

The enzyme catalyses 1,6-anhydro-N-acetyl-beta-muramate + ATP + H2O = N-acetyl-D-muramate 6-phosphate + ADP + H(+). The protein operates within amino-sugar metabolism; 1,6-anhydro-N-acetylmuramate degradation. Its pathway is cell wall biogenesis; peptidoglycan recycling. In terms of biological role, catalyzes the specific phosphorylation of 1,6-anhydro-N-acetylmuramic acid (anhMurNAc) with the simultaneous cleavage of the 1,6-anhydro ring, generating MurNAc-6-P. Is required for the utilization of anhMurNAc either imported from the medium or derived from its own cell wall murein, and thus plays a role in cell wall recycling. The chain is Anhydro-N-acetylmuramic acid kinase from Salmonella newport (strain SL254).